A 465-amino-acid chain; its full sequence is Adenosine 3'-phospho 5'-phosphosulfate transporter 1 (465 aa).

Helical transmembrane passes span 13 to 33, 61 to 81, 142 to 162, 185 to 205, 270 to 290, 299 to 319, 339 to 359, 370 to 390, 391 to 407, and 424 to 444; these read LVIC…SDLL, FLKL…GFLI, AVQL…WGVL, QFLV…YLQW, SYEY…MSGS, VTTL…SFTA, GVNL…GGFM, KFVF…LFIY, HTID…IMTL, and ISLL…LRVY.

It belongs to the nucleotide-sugar transporter family. SLC35B subfamily. As to expression, expressed throughout embryogenesis. During oogenesis, it is expressed strongly in the nurse cells of the germline. Maternally expressed at the syncytial blastoderm stage. Zygotically expressed, from after germ-band elongation in the invaginating salivary gland placodes. Remains expressed predominantly in this tissue throughout embryogenesis, but low-level expression may also be present throughout the embryo.

The protein localises to the golgi apparatus membrane. In terms of biological role, mediates the transport of adenosine 3'-phospho 5'-phosphosulfate (PAPS), from cytosol into Golgi. PAPS is a universal sulfuryl donor for sulfation events that take place in the Golgi. Required for the dorsoventral patterning, suggesting that it mediates the transport of the sulfate donor required for the sulfotransferase activity of pip (pipe). The polypeptide is Adenosine 3'-phospho 5'-phosphosulfate transporter 1 (sll) (Drosophila melanogaster (Fruit fly)).